Here is a 93-residue protein sequence, read N- to C-terminus: Small ribosomal subunit protein uS15 (93 aa).

The protein belongs to the universal ribosomal protein uS15 family. As to quaternary structure, part of the 30S ribosomal subunit. Forms a bridge to the 50S subunit in the 70S ribosome, contacting the 23S rRNA.

One of the primary rRNA binding proteins, it binds directly to 16S rRNA where it helps nucleate assembly of the platform of the 30S subunit by binding and bridging several RNA helices of the 16S rRNA. Its function is as follows. Forms an intersubunit bridge (bridge B4) with the 23S rRNA of the 50S subunit in the ribosome. The polypeptide is Small ribosomal subunit protein uS15 (Anaplasma phagocytophilum (strain HZ)).